We begin with the raw amino-acid sequence, 148 residues long: Ribonuclease 4 (148 aa).

The first 29 residues, 1 to 29 (MMDLQRTQSLLLLLVLTLLGLGLVQPSYG), serve as a signal peptide directing secretion. Position 30 is a pyrrolidone carboxylic acid (Gln-30). DUMP-binding residues include Arg-36, His-41, Lys-69, Asn-72, and Thr-73. His-41 (proton acceptor) is an active-site residue. 4 disulfide bridges follow: Cys-54–Cys-110, Cys-68–Cys-121, Cys-86–Cys-136, and Cys-93–Cys-100. The active-site Proton donor is the His-145. Phe-146 serves as a coordination point for dUMP.

This sequence belongs to the pancreatic ribonuclease family. As to expression, expressed in the cortical tubules of the kidney (at protein level). Also expressed in the medullary tubules of the kidney.

It is found in the secreted. Functionally, cleaves preferentially after uridine bases. Has antimicrobial activity against uropathogenic E.coli (UPEC). Probably contributes to urinary tract sterility. This chain is Ribonuclease 4 (Rnase4), found in Mus musculus (Mouse).